Here is a 376-residue protein sequence, read N- to C-terminus: Thymidine kinase (376 aa).

The interval 1–39 (MASYPCHQHASAFDQAARSRGHSNRRTALRPRRQQEATE) is disordered. The span at 19–32 (SRGHSNRRTALRPR) shows a compositional bias: basic residues. ATP is bound at residue 56–63 (GPHGMGKT). Residue Glu83 is the Proton acceptor of the active site. Positions 101 and 125 each coordinate substrate. Arg216 is a binding site for ATP. A substrate-binding site is contributed by Arg222. The segment at 260–280 (GQLSGTAVPPQGAEPQSNAGP) is disordered.

Belongs to the herpesviridae thymidine kinase family. As to quaternary structure, homodimer.

The catalysed reaction is thymidine + ATP = dTMP + ADP + H(+). Its function is as follows. Catalyzes the transfer of the gamma-phospho group of ATP to thymidine to generate dTMP in the salvage pathway of pyrimidine synthesis. The dTMP serves as a substrate for DNA polymerase during viral DNA replication. Allows the virus to be reactivated and to grow in non-proliferative cells lacking a high concentration of phosphorylated nucleic acid precursors. The sequence is that of Thymidine kinase from Homo sapiens (Human).